The following is a 238-amino-acid chain: MTEVTKNDFTEEGKIVRKIRSFVRREGRLTKGQEGAITECWSTMGIDFVEQVLDWNEVFGNNNPVVLEIGFGMGASLVEMAQKAPDVNFLGIEVHRPGVGACLAAAKEAGVTNLRVMCHDAVEVFESMIPDSSVTTLQLFFPDPWHKARHHKRRIVKAEFAEMIRPKLNAEGVFHMATDWENYAEHMIEVMNAAPGYENIATDGDYIPRPDERPLTKFEARGHRLGHGVWDIKFRRNA.

E68, E93, D120, and D143 together coordinate S-adenosyl-L-methionine. D143 is an active-site residue. Substrate is bound by residues K147, D179, and 216–219 (TKFE).

This sequence belongs to the class I-like SAM-binding methyltransferase superfamily. TrmB family.

The enzyme catalyses guanosine(46) in tRNA + S-adenosyl-L-methionine = N(7)-methylguanosine(46) in tRNA + S-adenosyl-L-homocysteine. The protein operates within tRNA modification; N(7)-methylguanine-tRNA biosynthesis. Functionally, catalyzes the formation of N(7)-methylguanine at position 46 (m7G46) in tRNA. This Aliivibrio salmonicida (strain LFI1238) (Vibrio salmonicida (strain LFI1238)) protein is tRNA (guanine-N(7)-)-methyltransferase.